A 438-amino-acid chain; its full sequence is Histidine--tRNA ligase (438 aa).

The protein belongs to the class-II aminoacyl-tRNA synthetase family. As to quaternary structure, homodimer.

Its subcellular location is the cytoplasm. The catalysed reaction is tRNA(His) + L-histidine + ATP = L-histidyl-tRNA(His) + AMP + diphosphate + H(+). This is Histidine--tRNA ligase from Blochmanniella pennsylvanica (strain BPEN).